We begin with the raw amino-acid sequence, 463 residues long: Argininosuccinate lyase (463 aa).

It belongs to the lyase 1 family. Argininosuccinate lyase subfamily.

It localises to the cytoplasm. It carries out the reaction 2-(N(omega)-L-arginino)succinate = fumarate + L-arginine. The protein operates within amino-acid biosynthesis; L-arginine biosynthesis; L-arginine from L-ornithine and carbamoyl phosphate: step 3/3. This Streptococcus pneumoniae serotype 2 (strain D39 / NCTC 7466) protein is Argininosuccinate lyase.